We begin with the raw amino-acid sequence, 553 residues long: Methyl-coenzyme M reductase I subunit alpha (553 aa).

Residue Q150 coordinates coenzyme F430. Residues R228, 259-260 (KH), and R273 contribute to the coenzyme B site. R274 carries the post-translational modification 5-methylarginine. Residues Y335 and Y447 each contribute to the coenzyme M site.

This sequence belongs to the methyl-coenzyme M reductase alpha subunit family. In terms of assembly, MCR is a hexamer of two alpha, two beta, and two gamma chains, forming a dimer of heterotrimers. Coenzyme F430 is required as a cofactor. Post-translationally, is methylated on C5 of Arg-274 by the methyltransferase MJ0841. This post-translational methylation, despite being not essential in vivo, plays a role for the stability and structural integrity of MCR.

The protein resides in the cytoplasm. The enzyme catalyses coenzyme B + methyl-coenzyme M = methane + coenzyme M-coenzyme B heterodisulfide. The protein operates within one-carbon metabolism; methyl-coenzyme M reduction; methane from methyl-coenzyme M: step 1/1. In terms of biological role, component of the methyl-coenzyme M reductase (MCR) I that catalyzes the reductive cleavage of methyl-coenzyme M (CoM-S-CH3 or 2-(methylthio)ethanesulfonate) using coenzyme B (CoB or 7-mercaptoheptanoylthreonine phosphate) as reductant which results in the production of methane and the mixed heterodisulfide of CoB and CoM (CoM-S-S-CoB). This is the final step in methanogenesis. In Methanocaldococcus jannaschii (strain ATCC 43067 / DSM 2661 / JAL-1 / JCM 10045 / NBRC 100440) (Methanococcus jannaschii), this protein is Methyl-coenzyme M reductase I subunit alpha (mcrA).